The chain runs to 344 residues: MAPSKQYSEGGQLQLMDAERIEEEEECFESIDKLISQGINSGDVKKLQDAGIYTCNGLMMHTKKSLTGIKGLSEAKVDKICEAAEKLLSQGFITGSDLLIKRKSVVRITTGSQALDKLLGGGIETLCITEAFGEFRSGKTQLAHTLCVSTQLPIHMHGGNGKVAYIDTEGTFRPERIVPIAERFGMDANAVLDNIIYARAYTYEHQYNLLLGLAAKMAEEPFRLLIVDSVIALFRVDFSGRGELAERQQKLAQMLSRLTKIAEEFNVAVYITNQVIADPGGGMFITDLKKPAGGHVLAHAATIRLMLRKGKGEQRVCKIFDAPNLPEGEAVFQVTSGGIMDAKD.

133–140 (GEFRSGKT) provides a ligand contact to ATP. Arg-235 contacts dsDNA. The ssDNA site is built by Arg-235, Phe-238, Arg-241, Arg-247, and Arg-315. Arg-241 and Arg-247 together coordinate dsDNA.

Belongs to the RecA family. DMC1 subfamily. Expressed in pollen mother cells and root tips.

Its subcellular location is the nucleus. Its function is as follows. Recombinase that may participate in meiotic recombination, specifically in homologous strand assimilation, which is required for the resolution of meiotic double-strand breaks. Exhibits DNA-dependent ATPase activity when bound to single-stranded DNA (ssDNA). Mediates renaturation of homologous complementary strands as well as assimilation of single strands into homologous supercoiled duplexes leading to D-loop formation. Binds circular single-stranded DNA (ssDNA) and circular double-stranded DNA (dsDNA) in vitro. Catalyzes DNA homologous renaturation and DNA strand exchange. The rates of these activities are dependent on the state of ATP hydrolysis. Forms helical filaments along ssDNA and dsDNA, and promotes strand exchange between ssDNA and dsDNA with long DNA substrates of several thousand base pairs. The presence of the replication protein A is not required for this activity. Seems to be required for homologous pairing and subsequent chromosome segregation during male meiosis. May be not directly required for homologous pairing during male meiosis. Required for synaptonemal complex assembly and crossover formation. Functions redundantly with DMC1B. This is Meiotic recombination protein DMC1 homolog A from Oryza sativa subsp. indica (Rice).